Consider the following 247-residue polypeptide: tRNA uridine(34) hydroxylase (247 aa).

Positions 124 to 218 (TKQDVIVIDT…YLEDTQNKNN (95 aa)) constitute a Rhodanese domain. Residue Cys178 is the Cysteine persulfide intermediate of the active site.

It belongs to the TrhO family.

It carries out the reaction uridine(34) in tRNA + AH2 + O2 = 5-hydroxyuridine(34) in tRNA + A + H2O. In terms of biological role, catalyzes oxygen-dependent 5-hydroxyuridine (ho5U) modification at position 34 in tRNAs. In Rickettsia africae (strain ESF-5), this protein is tRNA uridine(34) hydroxylase.